A 779-amino-acid chain; its full sequence is Potassium/sodium hyperpolarization-activated cyclic nucleotide-gated channel 3 (779 aa).

The segment at 1 to 47 (MEEEARPAAGAGEAATPARETPPAAPAQARAASGGVPESAPEPKRRQ) is disordered. Over 1 to 96 (MEEEARPAAG…PYSDFRFYWD (96 aa)) the chain is Cytoplasmic. Low complexity predominate over residues 7 to 32 (PAAGAGEAATPARETPPAAPAQARAA). Positions 45–90 (RRQLGTLLQPTVNKFSLRVFGSHKAVEIEQERVKSAGAWIIHPYSD) are involved in subunit assembly. A helical membrane pass occupies residues 97-117 (LIMLLLMVGNLIVLPVGITFF). Residues 118–123 (KEENSP) lie on the Extracellular side of the membrane. The helical transmembrane segment at 124 to 144 (PWIVFNVLSDTFFLLDLVLNF) threads the bilayer. Residues 145–170 (RTGIVVEEGAEILLAPRAIRTRYLRT) are Cytoplasmic-facing. A helical membrane pass occupies residues 171–191 (WFLVDLISSIPVDYIFLVVEL). Topologically, residues 192 to 200 (EPRLDAEVY) are extracellular. The chain crosses the membrane as a helical; Voltage-sensor span at residues 201–221 (KTARALRIVRFTKILSLLRLL). Topologically, residues 222-252 (RLSRLIRYIHQWEEIFHMTYDLASAVVRIFN) are cytoplasmic. Residues 253–273 (LIGMMLLLCHWDGCLQFLVPM) form a helical membrane-spanning segment. At 274-296 (LQDFPSDCWVSMNRMVNHSWGRQ) the chain is on the extracellular side. Residue Asn-290 is glycosylated (N-linked (GlcNAc...) asparagine). Positions 297–318 (YSHALFKAMSHMLCIGYGQQAP) form an intramembrane region, pore-forming. The Extracellular segment spans residues 319–328 (VGMPDVWLTM). Residues 329 to 349 (LSMIVGATCYAMFIGHATALI) form a helical membrane-spanning segment. Topologically, residues 350–779 (QSLDSSRRQY…PRGPQISANM (430 aa)) are cytoplasmic. The interaction with KCTD3 stretch occupies residues 353–779 (DSSRRQYQEK…PRGPQISANM (427 aa)). 3',5'-cyclic AMP is bound by residues Gly-491, Glu-492, Cys-494, Arg-501, Thr-502, Arg-542, and Arg-545. Residues 549–569 (KNSILQRKRSEPSPGSSGGVM) form a disordered region. Position 633 is a phosphoserine (Ser-633). Positions 687–697 (SLSRTGRSQVS) are enriched in polar residues. The segment at 687–779 (SLSRTGRSQV…PRGPQISANM (93 aa)) is disordered.

Belongs to the potassium channel HCN family. Homotetramer. The potassium channel is composed of a homo- or heterotetrameric complex of pore-forming subunits. Interacts with HCN1. Interacts with KCTD3; this interaction increases cell surface expression and current density of this channel. Interacts with PEX5L. Detected in hypothalamus, amygdala, olfactory bulb, hippocampus and retina (at protein level). Highly expressed in brain and heart, in particular in ventricle, atrium and in sinoatrial node (SAN). Detected at low levels in skeletal muscle and lung. Expressed in DRG neurons.

It localises to the cell membrane. It carries out the reaction K(+)(in) = K(+)(out). The enzyme catalyses Na(+)(in) = Na(+)(out). With respect to regulation, unlike HCN2 and HCN4, HCN3 is insensitive to cyclic nucleotides, such as cAMP or cGMP. This lack of sensitivity of HCN3, despite harboring a functional cyclic nucleotide-binding domain (CNBD), may be explained by its shorter C-terminal sequence, which may alter the normal autoinhibition of the channel. Inhibited by Cs(1+) and ivabradine. Phosphatidylinositol-4,5-bisphosphate (PIP(2)) shifts HCN3 activation to more depolarized potentials and accelerated activation kinetics. Its function is as follows. Hyperpolarization-activated ion channel that are permeable to sodium and potassium ions, with an about 3:1 preference for potassium ions. Contributes to the native pacemaker currents in heart (If) and in neurons (Ih). In particular, plays a pivotal role in maintaining excitability and promoting rhythmic burst firing within hypothalamic nuclei. Exerts a significant influence on the configuration of the cardiac action potential waveform. Does not appear to play a prominent role in the processing of acute, neuropathic, or inflammatory pain. The sequence is that of Potassium/sodium hyperpolarization-activated cyclic nucleotide-gated channel 3 (Hcn3) from Mus musculus (Mouse).